The chain runs to 61 residues: Small ribosomal subunit protein uS14B (61 aa).

Residues Cys-24, Cys-27, Cys-40, and Cys-43 each coordinate Zn(2+).

The protein belongs to the universal ribosomal protein uS14 family. Zinc-binding uS14 subfamily. Part of the 30S ribosomal subunit. Contacts proteins S3 and S10. Zn(2+) serves as cofactor.

Binds 16S rRNA, required for the assembly of 30S particles and may also be responsible for determining the conformation of the 16S rRNA at the A site. This Pediococcus pentosaceus (strain ATCC 25745 / CCUG 21536 / LMG 10740 / 183-1w) protein is Small ribosomal subunit protein uS14B.